Consider the following 389-residue polypeptide: Capreomycidine synthase (389 aa).

Lysine 230 is modified (N6-(pyridoxal phosphate)lysine).

Belongs to the class-II pyridoxal-phosphate-dependent aminotransferase family. It depends on pyridoxal 5'-phosphate as a cofactor.

The enzyme catalyses (2S,3S)-hydroxyarginine = (2S,3R)-capreomycidine + H2O. It functions in the pathway antibiotic biosynthesis. Involved in the biosynthesis of capreomycidine, an unusual amino acid used by non-ribosomal peptide synthases (NRPS) to make the tuberactinomycin class of peptide antibiotic such as viomycin and capreomycin. Catalyzes the dehydration of the C3 hydroxyl of (3S)-hydroxy-(2S)-arginine and the intramolecular cyclization to yield (2S,3R)-capreomycidine. The protein is Capreomycidine synthase of Streptomyces vinaceus.